Here is a 95-residue protein sequence, read N- to C-terminus: Signal recognition particle 19 kDa protein (95 aa).

The protein belongs to the SRP19 family. Part of the signal recognition particle protein translocation system, which is composed of SRP and FtsY. Archaeal SRP consists of a 7S RNA molecule of 300 nucleotides and two protein subunits: SRP54 and SRP19.

The protein localises to the cytoplasm. Involved in targeting and insertion of nascent membrane proteins into the cytoplasmic membrane. Binds directly to 7S RNA and mediates binding of the 54 kDa subunit of the SRP. This chain is Signal recognition particle 19 kDa protein, found in Staphylothermus marinus (strain ATCC 43588 / DSM 3639 / JCM 9404 / F1).